A 252-amino-acid polypeptide reads, in one-letter code: 3-dehydroquinate dehydratase (252 aa).

Residues 46-48 and Arg82 each bind 3-dehydroquinate; that span reads EWR. His143 serves as the catalytic Proton donor/acceptor. The active-site Schiff-base intermediate with substrate is Lys170. 3-dehydroquinate-binding residues include Arg212, Ser231, and Gln235.

It belongs to the type-I 3-dehydroquinase family. In terms of assembly, homodimer.

It catalyses the reaction 3-dehydroquinate = 3-dehydroshikimate + H2O. The protein operates within metabolic intermediate biosynthesis; chorismate biosynthesis; chorismate from D-erythrose 4-phosphate and phosphoenolpyruvate: step 3/7. In terms of biological role, involved in the third step of the chorismate pathway, which leads to the biosynthesis of aromatic amino acids. Catalyzes the cis-dehydration of 3-dehydroquinate (DHQ) and introduces the first double bond of the aromatic ring to yield 3-dehydroshikimate. In Listeria monocytogenes serotype 4b (strain F2365), this protein is 3-dehydroquinate dehydratase.